The chain runs to 226 residues: Protein-L-isoaspartate O-methyltransferase (226 aa).

Ser-66 is a catalytic residue.

It belongs to the methyltransferase superfamily. L-isoaspartyl/D-aspartyl protein methyltransferase family.

It is found in the cytoplasm. The catalysed reaction is [protein]-L-isoaspartate + S-adenosyl-L-methionine = [protein]-L-isoaspartate alpha-methyl ester + S-adenosyl-L-homocysteine. In terms of biological role, catalyzes the methyl esterification of L-isoaspartyl residues in peptides and proteins that result from spontaneous decomposition of normal L-aspartyl and L-asparaginyl residues. It plays a role in the repair and/or degradation of damaged proteins. The protein is Protein-L-isoaspartate O-methyltransferase of Methanopyrus kandleri (strain AV19 / DSM 6324 / JCM 9639 / NBRC 100938).